Reading from the N-terminus, the 98-residue chain is HssA/B-like protein 36 (98 aa).

The disordered stretch occupies residues 1-29; sequence MTLFSSISSISNPMTSSKSSISSFGSGTS.

This sequence belongs to the hssA/B family.

The polypeptide is HssA/B-like protein 36 (hssl36) (Dictyostelium discoideum (Social amoeba)).